Here is a 355-residue protein sequence, read N- to C-terminus: 3-dehydroquinate synthase (355 aa).

Residues 71–76, 105–109, 129–130, Lys142, Lys151, and 169–172 contribute to the NAD(+) site; these read EGEASK, GVVGD, TS, and TLKT. Zn(2+) is bound by residues Glu184, His246, and His263.

Belongs to the sugar phosphate cyclases superfamily. Dehydroquinate synthase family. It depends on Co(2+) as a cofactor. Zn(2+) is required as a cofactor. The cofactor is NAD(+).

Its subcellular location is the cytoplasm. The catalysed reaction is 7-phospho-2-dehydro-3-deoxy-D-arabino-heptonate = 3-dehydroquinate + phosphate. Its pathway is metabolic intermediate biosynthesis; chorismate biosynthesis; chorismate from D-erythrose 4-phosphate and phosphoenolpyruvate: step 2/7. In terms of biological role, catalyzes the conversion of 3-deoxy-D-arabino-heptulosonate 7-phosphate (DAHP) to dehydroquinate (DHQ). The chain is 3-dehydroquinate synthase from Streptococcus suis (strain 98HAH33).